The chain runs to 525 residues: GMP synthase [glutamine-hydrolyzing] (525 aa).

In terms of domain architecture, Glutamine amidotransferase type-1 spans 16-205 (PVLVVDFGAQ…LHDFAGLGAD (190 aa)). The active-site Nucleophile is the Cys-93. Active-site residues include His-179 and Glu-181. Positions 206-399 (WTAANIAGVL…LGLPEEIVAR (194 aa)) constitute a GMPS ATP-PPase domain. Residue 233 to 239 (SGGVDSA) coordinates ATP.

In terms of assembly, homodimer.

The catalysed reaction is XMP + L-glutamine + ATP + H2O = GMP + L-glutamate + AMP + diphosphate + 2 H(+). It functions in the pathway purine metabolism; GMP biosynthesis; GMP from XMP (L-Gln route): step 1/1. Functionally, catalyzes the synthesis of GMP from XMP. In Mycolicibacterium paratuberculosis (strain ATCC BAA-968 / K-10) (Mycobacterium paratuberculosis), this protein is GMP synthase [glutamine-hydrolyzing].